Here is a 344-residue protein sequence, read N- to C-terminus: L-rhamnose-proton symporter (344 aa).

The next 10 membrane-spanning stretches (helical) occupy residues 4–24 (PILLGIFWHFIGAASAACFYA), 38–58 (WSLGGFFSWIILPWSISWWLL), 68–88 (FDMATLLPIFLFGAMWGIGNI), 101–121 (MGIGIAIGVTLIIGTLMTPVL), 137–157 (TLLGVLVAVIGVAIVSYAGLL), 175–195 (LILAVMCGIFSAGMSFAMDAA), 214–234 (LPSYVVIMGGGAIVNLGFCFI), 255–275 (LIANALFAILGGVMWYLQFFF), 290–310 (ISWMLHMSFYVLCGGIVGLLF), and 324–344 (LVLGCVVIILAANIVGLGMAV).

The protein belongs to the L-rhamnose transporter (TC 2.A.7.6) family.

It localises to the cell inner membrane. The catalysed reaction is L-rhamnopyranose(in) + H(+)(in) = L-rhamnopyranose(out) + H(+)(out). Its function is as follows. Uptake of L-rhamnose across the cytoplasmic membrane with the concomitant transport of protons into the cell (symport system). This chain is L-rhamnose-proton symporter, found in Pectobacterium atrosepticum (strain SCRI 1043 / ATCC BAA-672) (Erwinia carotovora subsp. atroseptica).